The following is a 222-amino-acid chain: Triosephosphate isomerase (222 aa).

9–11 is a binding site for substrate; it reads NYK. The active-site Electrophile is the His-93. Glu-141 serves as the catalytic Proton acceptor. Substrate is bound by residues Ile-146, Gly-181, and 202–203; that span reads AS.

This sequence belongs to the triosephosphate isomerase family. Homotetramer; dimer of dimers.

The protein resides in the cytoplasm. It catalyses the reaction D-glyceraldehyde 3-phosphate = dihydroxyacetone phosphate. The protein operates within carbohydrate biosynthesis; gluconeogenesis. Its pathway is carbohydrate degradation; glycolysis; D-glyceraldehyde 3-phosphate from glycerone phosphate: step 1/1. Its function is as follows. Involved in the gluconeogenesis. Catalyzes stereospecifically the conversion of dihydroxyacetone phosphate (DHAP) to D-glyceraldehyde-3-phosphate (G3P). The polypeptide is Triosephosphate isomerase (Methanosarcina mazei (strain ATCC BAA-159 / DSM 3647 / Goe1 / Go1 / JCM 11833 / OCM 88) (Methanosarcina frisia)).